The primary structure comprises 1104 residues: MPLLDGPRNGETVTASAHNGIPIIDGVDPSTLRGDIDQDPNRRQKIVVVGLGMVAVAFIEKLVKLDSERRKYDIVVIGEEPHIAYNRVGLSSYFEHRKIEDLYLNPKEWYGSFKDRSFDYYLNTRVTDVFPQHKTVKTSTGDIVSYDILVLATGSDAVLPTSTPGHDAKGIFVYRTISDLERLMEFAANHKGQTGVTVGGGLLGLEAAKAMTDLEDFGSVKLIDRNKWVLARQLDGDAGSLVTKKIRDLGLEVLHEKRVAKIHTDDDNNVTGILFEDGQELDCCCICFAIGIRPRDELGGSTGIQCAKRGGFVIDESLRTSVNDIYAIGECASWENQTFGIIAPGIEMADVLSFNLTNPDKEPKRFNRPDLSTKLKLLGVDVASFGDFFADRDGPKFLPGQRPSAESIGAADPNREEEPQVKALTYRDPFGGVYKKYLFTMDGKYLLGGMMIGDTKDYVKLNQMVKSQKPLEVPPSEFILGAQSGGEENADDLDDSTQICSCHNVTKGDVVESVKSGTCKTIADVKSCTKAGTGCGGCMPLVQSIFNKTMLDMGQEVSNNLCVHIPYSRADLYNVIAIRQLRTFDDVMKSAGKCPDSLGCEICKPAIASILSSLFNPHLMDKEYHELQETNDRFLANIQRNGTFSVVPRVPGGEITADKLIAIGQVAKKYNLYCKITGGQRIDMFGARKQDLLDIWTELVDAGMESGHAYAKSLRTVKSCVGTTWCRFGVGDSVGMAIRLEQRYKSIRAPHKFKGAVSGCVRECAEAQNKDFGLIATEKGFNIFVGGNGGAKPRHSELLAKDVPPEEVIPILDRYVIFYIRTADKLQRTARWLESLPGGIEYLKDVVLNDKLGIAAEMERQMQELVDSYFCEWTETVRNPKRRKYFQQFANTDETVENVEIVKEREQVRPTYWPKDGANEDFKGHQWSSLSWQPVIKADYFSDGPPAISSANIKRGDTQLAIFKVKGKYYATQQMCPHKRTFVLSDGLIGDDDNGKYWVSCPYHKRNFELNGEQAGRCQNDEAMNIATFPVEEREDGWIYMKLPPVEELDSVLGTEKWKVKKGEAVDPFEAYDKKYSGMKGKRAGAKGIEGSKPTRSPSNTIDW.

44 to 79 is a binding site for FAD; the sequence is QKIVVVGLGMVAVAFIEKLVKLDSERRKYDIVVIGE. Residue 146–176 coordinates NAD(+); that stretch reads YDILVLATGSDAVLPTSTPGHDAKGIFVYRT. A disordered region spans residues 396-419; sequence KFLPGQRPSAESIGAADPNREEEP. Residues C500, C502, C535, and C538 each coordinate [2Fe-2S] cluster. [4Fe-4S] cluster is bound by residues C720, C726, C760, and C764. Residue C764 participates in siroheme binding. The 109-residue stretch at 932–1040 folds into the Rieske domain; the sequence is WQPVIKADYF…VEEREDGWIY (109 aa). 4 residues coordinate [2Fe-2S] cluster: C976, H978, C1001, and H1004. Residues 1081–1104 are disordered; it reads GKRAGAKGIEGSKPTRSPSNTIDW. Residues 1094–1104 show a composition bias toward polar residues; the sequence is PTRSPSNTIDW.

Belongs to the nitrite and sulfite reductase 4Fe-4S domain family. As to quaternary structure, homodimer. The cofactor is siroheme. [4Fe-4S] cluster serves as cofactor. It depends on FAD as a cofactor. [2Fe-2S] cluster is required as a cofactor.

It carries out the reaction NH4(+) + 3 NADP(+) + 2 H2O = nitrite + 3 NADPH + 5 H(+). The enzyme catalyses NH4(+) + 3 NAD(+) + 2 H2O = nitrite + 3 NADH + 5 H(+). It functions in the pathway nitrogen metabolism; nitrate reduction (assimilation). The polypeptide is Nitrite reductase [NAD(P)H] (niiA) (Emericella nidulans (strain FGSC A4 / ATCC 38163 / CBS 112.46 / NRRL 194 / M139) (Aspergillus nidulans)).